Consider the following 449-residue polypeptide: MMKSSELEKKKVLVLGTAKSGIAAATYLVKAGAVVTVNDGGTPSENDVQTLESLKVETLFGSHPLSLLDGTDLIVKNPGIPYQIPLLQKALELGIPVWTEVELAYRSTKADWVAITGSNGKTTTTTLVHELLKRGSKRVHLAGNIGFPAVEVAQQAEAGDVIVIELSSFQLMGIESFCPVSAAFLNLSPAHLDYHGDVTSYAAAKARIFSNMDEAGRLVVNADDEEVMRLSETAAAERLTFSRRQDAYAHIENDMIFVGQTEILPVRELALGGGHNLENVLAALTLIEPFGISLTAIQDVLRTFGGVAHRTEYIGEFAGRKVYNDSKATNNVATEAALSGFQSPIIWICGGLERGADLTPLKSAMTHVKHVIGLGETGQRFADLATEQQIASTVTREMEEAVATAFDVSKPGDIILLSPASASWDQYKTYEERGEHFIRSVQKVGGMMK.

117 to 123 (GSNGKTT) serves as a coordination point for ATP.

Belongs to the MurCDEF family.

It localises to the cytoplasm. It catalyses the reaction UDP-N-acetyl-alpha-D-muramoyl-L-alanine + D-glutamate + ATP = UDP-N-acetyl-alpha-D-muramoyl-L-alanyl-D-glutamate + ADP + phosphate + H(+). It functions in the pathway cell wall biogenesis; peptidoglycan biosynthesis. Cell wall formation. Catalyzes the addition of glutamate to the nucleotide precursor UDP-N-acetylmuramoyl-L-alanine (UMA). This is UDP-N-acetylmuramoylalanine--D-glutamate ligase from Exiguobacterium sibiricum (strain DSM 17290 / CCUG 55495 / CIP 109462 / JCM 13490 / 255-15).